We begin with the raw amino-acid sequence, 328 residues long: Malate dehydrogenase (328 aa).

12–18 (GAAGQIG) is a binding site for NAD(+). Positions 95 and 101 each coordinate substrate. NAD(+) is bound by residues asparagine 108, glutamine 115, and 132–134 (VGN). Substrate is bound by residues asparagine 134 and arginine 165. The active-site Proton acceptor is the histidine 190.

The protein belongs to the LDH/MDH superfamily. MDH type 2 family.

The enzyme catalyses (S)-malate + NAD(+) = oxaloacetate + NADH + H(+). In terms of biological role, catalyzes the reversible oxidation of malate to oxaloacetate. The sequence is that of Malate dehydrogenase from Polaromonas naphthalenivorans (strain CJ2).